Consider the following 154-residue polypeptide: Probable biofilm-surface layer protein B (154 aa).

An N-terminal signal peptide occupies residues 1 to 30; sequence MLKRTSFVSSLFISSAVLLSILLPSGQAHA.

The protein belongs to the BslA/BslB family. Monomer in vitro.

It localises to the secreted. In terms of biological role, has a minor role in biofilm architecture. May contribute to the surface hydrophobicity. The polypeptide is Probable biofilm-surface layer protein B (Bacillus subtilis (strain 168)).